A 197-amino-acid polypeptide reads, in one-letter code: Protein GrpE (197 aa).

The tract at residues 1–41 (MSSKEQKTPEGQAPEEIITEQHEEVEAVEPDASAEQVDPRD) is disordered.

It belongs to the GrpE family. Homodimer.

The protein resides in the cytoplasm. In terms of biological role, participates actively in the response to hyperosmotic and heat shock by preventing the aggregation of stress-denatured proteins, in association with DnaK and GrpE. It is the nucleotide exchange factor for DnaK and may function as a thermosensor. Unfolded proteins bind initially to DnaJ; upon interaction with the DnaJ-bound protein, DnaK hydrolyzes its bound ATP, resulting in the formation of a stable complex. GrpE releases ADP from DnaK; ATP binding to DnaK triggers the release of the substrate protein, thus completing the reaction cycle. Several rounds of ATP-dependent interactions between DnaJ, DnaK and GrpE are required for fully efficient folding. This Enterobacter sp. (strain 638) protein is Protein GrpE.